The sequence spans 367 residues: Alginate lyase (367 aa).

An N-terminal signal peptide occupies residues 1–27 (MKTSHLIRIALPGALAAALLASQVSQA). Substrate is bound by residues 65–66 (SK), 138–139 (HT), and Y256.

The protein belongs to the polysaccharide lyase 5 family.

It localises to the periplasm. It catalyses the reaction Eliminative cleavage of alginate to give oligosaccharides with 4-deoxy-alpha-L-erythro-hex-4-enuronosyl groups at their non-reducing ends and beta-D-mannuronate at their reducing end.. Its function is as follows. Catalyzes the depolymerization of alginate by cleaving the beta-1,4 glycosidic bond between two adjacent sugar residues via a beta-elimination mechanism. May serve to degrade mislocalized alginate that is trapped in the periplasmic space. The sequence is that of Alginate lyase from Pseudomonas aeruginosa (strain LESB58).